Here is a 332-residue protein sequence, read N- to C-terminus: Tetraacyldisaccharide 4'-kinase (332 aa).

Residue 60–67 (TVGGTGKT) participates in ATP binding.

This sequence belongs to the LpxK family.

It carries out the reaction a lipid A disaccharide + ATP = a lipid IVA + ADP + H(+). It functions in the pathway glycolipid biosynthesis; lipid IV(A) biosynthesis; lipid IV(A) from (3R)-3-hydroxytetradecanoyl-[acyl-carrier-protein] and UDP-N-acetyl-alpha-D-glucosamine: step 6/6. Functionally, transfers the gamma-phosphate of ATP to the 4'-position of a tetraacyldisaccharide 1-phosphate intermediate (termed DS-1-P) to form tetraacyldisaccharide 1,4'-bis-phosphate (lipid IVA). The chain is Tetraacyldisaccharide 4'-kinase from Pseudomonas aeruginosa (strain LESB58).